The sequence spans 376 residues: Carbamoyl phosphate synthase small chain (376 aa).

The CPSase stretch occupies residues 1–183 (MSKAVLVLED…PDGPPGVSRF (183 aa)). Residues serine 46, glycine 232, and glycine 234 each contribute to the L-glutamine site. Positions 184 to 376 (TVAALDLGIK…FVELMAGEGR (193 aa)) constitute a Glutamine amidotransferase type-1 domain. The Nucleophile role is filled by cysteine 260. 5 residues coordinate L-glutamine: phenylalanine 261, glutamine 264, asparagine 302, glycine 304, and phenylalanine 305. Catalysis depends on residues histidine 350 and glutamate 352.

Belongs to the CarA family. In terms of assembly, composed of two chains; the small (or glutamine) chain promotes the hydrolysis of glutamine to ammonia, which is used by the large (or ammonia) chain to synthesize carbamoyl phosphate. Tetramer of heterodimers (alpha,beta)4.

It catalyses the reaction hydrogencarbonate + L-glutamine + 2 ATP + H2O = carbamoyl phosphate + L-glutamate + 2 ADP + phosphate + 2 H(+). The enzyme catalyses L-glutamine + H2O = L-glutamate + NH4(+). The protein operates within amino-acid biosynthesis; L-arginine biosynthesis; carbamoyl phosphate from bicarbonate: step 1/1. It functions in the pathway pyrimidine metabolism; UMP biosynthesis via de novo pathway; (S)-dihydroorotate from bicarbonate: step 1/3. In terms of biological role, small subunit of the glutamine-dependent carbamoyl phosphate synthetase (CPSase). CPSase catalyzes the formation of carbamoyl phosphate from the ammonia moiety of glutamine, carbonate, and phosphate donated by ATP, constituting the first step of 2 biosynthetic pathways, one leading to arginine and/or urea and the other to pyrimidine nucleotides. The small subunit (glutamine amidotransferase) binds and cleaves glutamine to supply the large subunit with the substrate ammonia. This chain is Carbamoyl phosphate synthase small chain, found in Mycobacterium bovis (strain ATCC BAA-935 / AF2122/97).